A 359-amino-acid polypeptide reads, in one-letter code: Type II methyltransferase M.HinfI (359 aa).

In terms of domain architecture, RAMA spans 275–358; it reads KVPMKTLIEA…LDSLRYEYTN (84 aa).

This sequence belongs to the N(4)/N(6)-methyltransferase family.

The enzyme catalyses a 2'-deoxyadenosine in DNA + S-adenosyl-L-methionine = an N(6)-methyl-2'-deoxyadenosine in DNA + S-adenosyl-L-homocysteine + H(+). Functionally, a beta subtype methylase that recognizes the double-stranded sequence 5'-GANTC-3', methylates A-2 on both strands, and protects the DNA from cleavage by the HinfI endonuclease. This Haemophilus influenzae protein is Type II methyltransferase M.HinfI (hinfIM).